A 400-amino-acid chain; its full sequence is Elongation factor Tu 2 (400 aa).

Positions 10–209 (KPHVNIGTIG…AVDEYIPTPQ (200 aa)) constitute a tr-type G domain. The G1 stretch occupies residues 19-26 (GHVDHGKT). 19–26 (GHVDHGKT) is a GTP binding site. Position 26 (Thr-26) interacts with Mg(2+). The tract at residues 60 to 64 (GITIN) is G2. The tract at residues 81–84 (DCPG) is G3. GTP-binding positions include 81-85 (DCPGH) and 136-139 (NKAD). The G4 stretch occupies residues 136-139 (NKAD). Residues 174–176 (SAL) are G5.

This sequence belongs to the TRAFAC class translation factor GTPase superfamily. Classic translation factor GTPase family. EF-Tu/EF-1A subfamily. In terms of assembly, monomer.

It is found in the cytoplasm. The catalysed reaction is GTP + H2O = GDP + phosphate + H(+). In terms of biological role, GTP hydrolase that promotes the GTP-dependent binding of aminoacyl-tRNA to the A-site of ribosomes during protein biosynthesis. In Pelotomaculum thermopropionicum (strain DSM 13744 / JCM 10971 / SI), this protein is Elongation factor Tu 2.